The sequence spans 204 residues: FMN-dependent NADH:quinone oxidoreductase (204 aa).

Residues Ser10 and 16 to 18 (SKS) contribute to the FMN site.

This sequence belongs to the azoreductase type 1 family. As to quaternary structure, homodimer. FMN is required as a cofactor.

The enzyme catalyses 2 a quinone + NADH + H(+) = 2 a 1,4-benzosemiquinone + NAD(+). It catalyses the reaction N,N-dimethyl-1,4-phenylenediamine + anthranilate + 2 NAD(+) = 2-(4-dimethylaminophenyl)diazenylbenzoate + 2 NADH + 2 H(+). Quinone reductase that provides resistance to thiol-specific stress caused by electrophilic quinones. Functionally, also exhibits azoreductase activity. Catalyzes the reductive cleavage of the azo bond in aromatic azo compounds to the corresponding amines. In Ruegeria pomeroyi (strain ATCC 700808 / DSM 15171 / DSS-3) (Silicibacter pomeroyi), this protein is FMN-dependent NADH:quinone oxidoreductase.